The sequence spans 207 residues: Ribonuclease HII (207 aa).

An RNase H type-2 domain is found at 19–207 (HCIAGVDEVG…PVKKALGIEE (189 aa)). Aspartate 25, glutamate 26, and aspartate 117 together coordinate a divalent metal cation.

This sequence belongs to the RNase HII family. Mn(2+) is required as a cofactor. It depends on Mg(2+) as a cofactor.

It localises to the cytoplasm. The catalysed reaction is Endonucleolytic cleavage to 5'-phosphomonoester.. In terms of biological role, endonuclease that specifically degrades the RNA of RNA-DNA hybrids. The chain is Ribonuclease HII from Vibrio vulnificus (strain CMCP6).